Reading from the N-terminus, the 270-residue chain is MNNRIIYVVSDSVGETAELVVKAALSQFNGSADDTHVRRIPYVEDIGTINEVISLAKADGGIICFTLVVPEIREYLIAEAEKANVLYYDIIGPLIDKMETAYGLTAKYEPGRVRQLDEDYFKKVEAIEFAVKYDDGRDPRGILKADIVLIGVSRTSKTPLSQYLAHKRLKVANVPIVPEVDPPEELFNVDPKKCIGLKISPDKLNHIRKERLKSLGLNDKAIYANINRIKEELEYFEKIVDRIGCQVVDVSNKAVEETANIIHHLKTKNI.

Residue 151–158 participates in ADP binding; it reads GVSRTSKT.

Belongs to the pyruvate, phosphate/water dikinase regulatory protein family. PDRP subfamily.

It catalyses the reaction N(tele)-phospho-L-histidyl/L-threonyl-[pyruvate, phosphate dikinase] + ADP = N(tele)-phospho-L-histidyl/O-phospho-L-threonyl-[pyruvate, phosphate dikinase] + AMP + H(+). The enzyme catalyses N(tele)-phospho-L-histidyl/O-phospho-L-threonyl-[pyruvate, phosphate dikinase] + phosphate + H(+) = N(tele)-phospho-L-histidyl/L-threonyl-[pyruvate, phosphate dikinase] + diphosphate. Bifunctional serine/threonine kinase and phosphorylase involved in the regulation of the pyruvate, phosphate dikinase (PPDK) by catalyzing its phosphorylation/dephosphorylation. This chain is Putative pyruvate, phosphate dikinase regulatory protein (yqfL), found in Bacillus subtilis (strain 168).